A 199-amino-acid chain; its full sequence is Imidazole glycerol phosphate synthase subunit HisH 2 (199 aa).

Residues 1–199 enclose the Glutamine amidotransferase type-1 domain; sequence MIAVIDVSGN…NNFLSLESTC (199 aa). The active-site Nucleophile is the C76. Residues H177 and E179 contribute to the active site.

Heterodimer of HisH and HisF.

It localises to the cytoplasm. The enzyme catalyses 5-[(5-phospho-1-deoxy-D-ribulos-1-ylimino)methylamino]-1-(5-phospho-beta-D-ribosyl)imidazole-4-carboxamide + L-glutamine = D-erythro-1-(imidazol-4-yl)glycerol 3-phosphate + 5-amino-1-(5-phospho-beta-D-ribosyl)imidazole-4-carboxamide + L-glutamate + H(+). It carries out the reaction L-glutamine + H2O = L-glutamate + NH4(+). Its pathway is amino-acid biosynthesis; L-histidine biosynthesis; L-histidine from 5-phospho-alpha-D-ribose 1-diphosphate: step 5/9. Functionally, IGPS catalyzes the conversion of PRFAR and glutamine to IGP, AICAR and glutamate. The HisH subunit provides the glutamine amidotransferase activity that produces the ammonia necessary to HisF for the synthesis of IGP and AICAR. In Legionella pneumophila (strain Paris), this protein is Imidazole glycerol phosphate synthase subunit HisH 2.